We begin with the raw amino-acid sequence, 230 residues long: MNDADVSKQIQQMVRFIRQEAEEKANEISVSAEEEFNIEKLQLVEAEKKKIRQEYERKEKQVEIRKKIEYSMQLNASRIKVLQAQDDLVSNMMEAASKEVLNVSRDHNSYKKLLKDLIVQSLLRLKEPAVLLRCRKDDHHLVESVLESAKEEYAQKLQVHPPEIIVDHHIYLPPGPGHHNAHGPSCSGGVVVASRDGKIVCENTLDARLDVVFRKKLPEIRKQLVSQVAA.

This sequence belongs to the V-ATPase E subunit family. V-ATPase is a heteromultimeric enzyme composed of a peripheral catalytic V1 complex (components A to H) attached to an integral membrane V0 proton pore complex (components: a, c, c', c'' and d).

Its function is as follows. Subunit of the peripheral V1 complex of vacuolar ATPase essential for assembly or catalytic function. V-ATPase is responsible for acidifying a variety of intracellular compartments in eukaryotic cells. The protein is V-type proton ATPase subunit E (VATE) of Citrus limon (Lemon).